Consider the following 550-residue polypeptide: Carboxypeptidase Y homolog A (550 aa).

A signal peptide spans 1 to 18; the sequence is MKSLVLGLLVGSAIASGP. Residues 19–131 constitute a propeptide that is removed on maturation; sequence LQHVLHAPPE…KLAQYDLRIR (113 aa). Cystine bridges form between C185/C424, C319/C333, C343/C366, C350/C359, and C388/C394. The N-linked (GlcNAc...) asparagine glycan is linked to N216. S272 is a catalytic residue. Residue D463 is part of the active site. Residues N493 and N514 are each glycosylated (N-linked (GlcNAc...) asparagine). The active site involves H525.

Belongs to the peptidase S10 family.

The protein localises to the vacuole. It catalyses the reaction Release of a C-terminal amino acid with broad specificity.. In terms of biological role, vacuolar carboxypeptidase involved in degradation of small peptides. Digests preferentially peptides containing an aliphatic or hydrophobic residue in P1' position, as well as methionine, leucine or phenylalanine in P1 position of ester substrate. The sequence is that of Carboxypeptidase Y homolog A (CPYA) from Paracoccidioides lutzii (strain ATCC MYA-826 / Pb01) (Paracoccidioides brasiliensis).